Here is a 228-residue protein sequence, read N- to C-terminus: Lipoprotein-releasing system ATP-binding protein LolD (228 aa).

The 222-residue stretch at 6–227 folds into the ABC transporter domain; the sequence is LELLGIDRTY…LKDGKLIDYV (222 aa). Position 42-49 (42-49) interacts with ATP; that stretch reads GPSGSGKS.

This sequence belongs to the ABC transporter superfamily. Lipoprotein translocase (TC 3.A.1.125) family. The complex is composed of two ATP-binding proteins (LolD) and two transmembrane proteins (LolC and LolE).

The protein localises to the cell inner membrane. In terms of biological role, part of the ABC transporter complex LolCDE involved in the translocation of mature outer membrane-directed lipoproteins, from the inner membrane to the periplasmic chaperone, LolA. Responsible for the formation of the LolA-lipoprotein complex in an ATP-dependent manner. This chain is Lipoprotein-releasing system ATP-binding protein LolD, found in Hyphomonas neptunium (strain ATCC 15444).